The primary structure comprises 663 residues: Polyunsaturated fatty acid lipoxygenase ALOX12 (663 aa).

The PLAT domain maps to Gly-2–Arg-114. A Lipoxygenase domain is found at Leu-115–Ile-663. Residue Ser-246 is modified to Phosphoserine. Fe cation is bound by residues His-360, His-365, His-540, Asn-544, and Ile-663.

It belongs to the lipoxygenase family. Fe cation serves as cofactor. In terms of tissue distribution, found primarily in platelets and in microsomal and cytosolic fractions of the epidermis (at protein level).

It localises to the cytoplasm. It is found in the cytosol. The protein resides in the membrane. It catalyses the reaction (5Z,8Z,11Z,14Z)-eicosatetraenoate + O2 = (12S)-hydroperoxy-(5Z,8Z,10E,14Z)-eicosatetraenoate. The catalysed reaction is (9Z,12Z)-octadecadienoate + O2 = (13S)-hydroperoxy-(9Z,11E)-octadecadienoate. It carries out the reaction 2 leukotriene A4 + O2 + 2 H2O = 2 lipoxin A4. The enzyme catalyses 2 leukotriene A4 + O2 + 2 H2O = 2 lipoxin B4. It catalyses the reaction (5Z,8Z,11Z)-eicosatrienoate + O2 = (12S)-hydroperoxy-(5Z,8Z,10E)-eicosatrienoate. The catalysed reaction is (8Z,11Z,14Z)-eicosatrienoate + O2 = (12S)-hydroperoxy-(8Z,10E,14Z)-eicosatrienoate. It carries out the reaction (4Z,7Z,10Z,13Z,16Z,19Z)-docosahexaenoate + O2 = (14S)-hydroperoxy-(4Z,7Z,10Z,12E,16Z,19Z)-docosahexaenoate. The enzyme catalyses (7S)-hydroperoxy-(4Z,8E,10Z,13Z,16Z,19Z)-docosahexaenoate + O2 = (7S,14S)-dihydroperoxy-(4Z,8E,10Z,12E,16Z,19Z)-docosahexaenoate. It catalyses the reaction (7S)-hydroperoxy-(4Z,8E,10Z,13Z,16Z,19Z)-docosahexaenoate + O2 = (7S,17S)-dihydroperoxy-(4Z,8E,10Z,13Z,15E,19Z)-docosahexaenoate. The catalysed reaction is (14R,15S)-epoxy-(5Z,8Z,11Z)-eicosatrienoate + O2 = (12S)-hydroperoxy-(14R,15S)-epoxy-(5Z,8Z,10E)-eicosatrienoate. It carries out the reaction (14S,15R)-epoxy-(5Z,8Z,11Z)-eicosatrienoate + O2 = (12S)-hydroperoxy-(14S,15R)-epoxy-(5Z,8Z,10E)-eicosatrienoate. The enzyme catalyses (5Z,8Z,11Z,14Z)-eicosatetraenoate + O2 = (15S)-hydroperoxy-(5Z,8Z,11Z,13E)-eicosatetraenoate. It catalyses the reaction (14S)-hydroperoxy-(4Z,7Z,10Z,12E,16Z,19Z)-docosahexaenoate = (13S,14S)-epoxy-(4Z,7Z,9E,11E,16Z,19Z)-docosahexaenoate + H2O. The catalysed reaction is N-(5Z,8Z,11Z,14Z)-eicosatetraenoyl-L-alanine + O2 = N-(15S)-hydroperoxy-(5Z,8Z,11Z,13E)-eicosatetraenoyl-alanine. It carries out the reaction N-(5Z,8Z,11Z,14Z)-eicosatetraenoyl-L-alanine + O2 = N-(12S)-hydroperoxy-(5Z,8Z,10E,14Z)-eicosatetraenoyl-alanine. The enzyme catalyses N-(5Z,8Z,11Z,14Z)-eicosatetraenoyl-gamma-aminobutanoate + O2 = N-(15S)-hydroperoxy-(5Z,8Z,11Z,13E)-eicosatetraenoyl-gamma-aminobutanoate. It catalyses the reaction N-(5Z,8Z,11Z,14Z)-eicosatetraenoyl-gamma-aminobutanoate + O2 = N-(12S)-hydroperoxy-(5Z,8Z,10E,14Z)-eicosatetraenoyl-gamma-aminobutanoate. The catalysed reaction is N-(5Z,8Z,11Z,14Z)-eicosatetraenoyl-glycine + O2 = N-(15S)-hydroperoxy-(5Z,8Z,11Z,13E)-eicosatetraenoyl-glycine. It carries out the reaction N-(5Z,8Z,11Z,14Z)-eicosatetraenoyl-glycine + O2 = N-(12S)-hydroperoxy-(5Z,8Z,10E,14Z)-eicosatetraenoyl-glycine. The enzyme catalyses N-(5Z,8Z,11Z,14Z)-eicosatetraenoyl-taurine + O2 = N-(12S)-hydroperoxy-(5Z,8Z,10E,14Z)-eicosatetraenoyl-taurine. It catalyses the reaction N-(5Z,8Z,11Z,14Z)-eicosatetraenoyl-taurine + O2 = N-(15S)-hydroperoxy-(5Z,8Z,11Z,13E)-eicosatetraenoyl-taurine. The catalysed reaction is (5Z,8Z,11Z,14Z,17Z)-eicosapentaenoate + O2 = (12S)-hydroperoxy-(5Z,8Z,10E,14Z,17Z)-eicosapentaenoate. Its pathway is lipid metabolism; hydroperoxy eicosatetraenoic acid biosynthesis. With respect to regulation, activated by EGF. Arachidonic acid conversion is inhibited by (13S,14S)-epoxy-(4Z,7Z,9E,11E,16Z,19Z)-docosahexaenoate (13S,14S-epoxy-DHA). Arachidonate 12-lipoxygenase activity is decreased when PH decreases from 7.4 to 6. Catalyzes the regio and stereo-specific incorporation of molecular oxygen into free and esterified polyunsaturated fatty acids generating lipid hydroperoxides that can be further reduced to the corresponding hydroxy species. Mainly converts arachidonate ((5Z,8Z,11Z,14Z)-eicosatetraenoate) to the specific bioactive lipid (12S)-hydroperoxyeicosatetraenoate/(12S)-HPETE. Through the production of bioactive lipids like (12S)-HPETE it regulates different biological processes including platelet activation. It can also catalyze the epoxidation of double bonds of polyunsaturated fatty acids such as (14S)-hydroperoxy-docosahexaenoate/(14S)-HPDHA resulting in the formation of (13S,14S)-epoxy-DHA. Furthermore, it may participate in the sequential oxidations of DHA ((4Z,7Z,10Z,13Z,16Z,19Z)-docosahexaenoate) to generate specialized pro-resolving mediators (SPMs) like resolvin D5 ((7S,17S)-diHPDHA) and (7S,14S)-diHPDHA, that actively down-regulate the immune response and have anti-aggregation properties with platelets. An additional function involves a multistep process by which it transforms leukotriene A4/LTA4 into the bioactive lipids lipoxin A4/LXA4 and lipoxin B4/LXB4, both are vasoactive and LXA4 may regulate neutrophil function via occupancy of specific recognition sites. Can also peroxidize linoleate ((9Z,12Z)-octadecadienoate) to (13S)-hydroperoxyoctadecadienoate/ (13S-HPODE). Due to its role in regulating both the expression of the vascular endothelial growth factor (VEGF, an angiogenic factor involved in the survival and metastasis of solid tumors) and the expression of integrin beta-1 (known to affect tumor cell migration and proliferation), it can be regarded as protumorigenic. Important for cell survival, as it may play a role not only in proliferation but also in the prevention of apoptosis in vascular smooth muscle cells. The protein is Polyunsaturated fatty acid lipoxygenase ALOX12 (Alox12) of Mus musculus (Mouse).